The following is a 408-amino-acid chain: Phosphoglycerate kinase (408 aa).

Substrate-binding positions include 24–26, Arg-39, 62–65, Arg-121, and Arg-161; these read DLN and HLGR. ATP is bound by residues Lys-211, Gly-307, Glu-338, and 364–367; that span reads GGDS.

This sequence belongs to the phosphoglycerate kinase family. Monomer.

The protein resides in the cytoplasm. It carries out the reaction (2R)-3-phosphoglycerate + ATP = (2R)-3-phospho-glyceroyl phosphate + ADP. The protein operates within carbohydrate degradation; glycolysis; pyruvate from D-glyceraldehyde 3-phosphate: step 2/5. The chain is Phosphoglycerate kinase from Pseudarthrobacter chlorophenolicus (strain ATCC 700700 / DSM 12829 / CIP 107037 / JCM 12360 / KCTC 9906 / NCIMB 13794 / A6) (Arthrobacter chlorophenolicus).